Reading from the N-terminus, the 79-residue chain is Darcynin (79 aa).

Belongs to the darcynin family.

In Chromobacterium violaceum (strain ATCC 12472 / DSM 30191 / JCM 1249 / CCUG 213 / NBRC 12614 / NCIMB 9131 / NCTC 9757 / MK), this protein is Darcynin.